Here is a 196-residue protein sequence, read N- to C-terminus: MADS-box transcription factor 32 (196 aa).

Residues 1-61 (MGRGRSEIKR…GKLYHFLSPT (61 aa)) enclose the MADS-box domain. Residues 85 to 175 (RQERRAELEK…CDKIAHAQTL (91 aa)) form the K-box domain.

It localises to the nucleus. Functionally, probable transcription factor. This is MADS-box transcription factor 32 (MADS32) from Oryza sativa subsp. japonica (Rice).